The sequence spans 271 residues: Mannosyl-3-phosphoglycerate phosphatase (271 aa).

Asp-13 functions as the Nucleophile in the catalytic mechanism. 3 residues coordinate Mg(2+): Asp-13, Asp-15, and Asp-214.

It belongs to the HAD-like hydrolase superfamily. MPGP family. It depends on Mg(2+) as a cofactor.

Its subcellular location is the cytoplasm. It carries out the reaction 2-O-(alpha-D-mannosyl)-3-phosphoglycerate + H2O = (2R)-2-O-(alpha-D-mannosyl)-glycerate + phosphate. The sequence is that of Mannosyl-3-phosphoglycerate phosphatase from Escherichia coli (strain SE11).